The chain runs to 308 residues: Sulfoquinovosyl glycerol transport system permease protein SmoG (308 aa).

Transmembrane regions (helical) follow at residues Leu28–Val48, Val92–Leu112, Ser126–Phe146, Gly164–Trp184, Ile223–Ala243, and Leu279–Val299. Residues Thr88 to Tyr300 form the ABC transmembrane type-1 domain.

The protein belongs to the binding-protein-dependent transport system permease family. The complex is probably composed of two ATP-binding proteins (SmoE), two transmembrane proteins (SmoG and SmoH) and a solute-binding protein (SmoF).

It is found in the cell inner membrane. Part of the ABC transporter complex SmoEFGH involved in sulfoquinovosyl glycerol (SQGro) uptake. Responsible for the translocation of the substrate across the membrane. This is Sulfoquinovosyl glycerol transport system permease protein SmoG from Agrobacterium fabrum (strain C58 / ATCC 33970) (Agrobacterium tumefaciens (strain C58)).